A 226-amino-acid chain; its full sequence is Orotate phosphoribosyltransferase (226 aa).

Residues R107, K108, K111, and 133-141 each bind 5-phospho-alpha-D-ribose 1-diphosphate; that span reads EDLTTDGGS. T137 provides a ligand contact to orotate.

Belongs to the purine/pyrimidine phosphoribosyltransferase family. PyrE subfamily. Homodimer. Mg(2+) is required as a cofactor.

The catalysed reaction is orotidine 5'-phosphate + diphosphate = orotate + 5-phospho-alpha-D-ribose 1-diphosphate. The protein operates within pyrimidine metabolism; UMP biosynthesis via de novo pathway; UMP from orotate: step 1/2. Its function is as follows. Catalyzes the transfer of a ribosyl phosphate group from 5-phosphoribose 1-diphosphate to orotate, leading to the formation of orotidine monophosphate (OMP). The protein is Orotate phosphoribosyltransferase of Ruegeria sp. (strain TM1040) (Silicibacter sp.).